The chain runs to 78 residues: Acyl carrier protein (78 aa).

In terms of domain architecture, Carrier spans 2-77 (STIEERVKKI…AAIDFINANQ (76 aa)). An O-(pantetheine 4'-phosphoryl)serine modification is found at Ser-37.

It belongs to the acyl carrier protein (ACP) family. In terms of processing, 4'-phosphopantetheine is transferred from CoA to a specific serine of apo-ACP by AcpS. This modification is essential for activity because fatty acids are bound in thioester linkage to the sulfhydryl of the prosthetic group.

Its subcellular location is the cytoplasm. The protein operates within lipid metabolism; fatty acid biosynthesis. Its function is as follows. Carrier of the growing fatty acid chain in fatty acid biosynthesis. In Yersinia pseudotuberculosis serotype O:1b (strain IP 31758), this protein is Acyl carrier protein.